A 149-amino-acid chain; its full sequence is UPF0260 protein PA1299 (149 aa).

The protein belongs to the UPF0260 family.

The sequence is that of UPF0260 protein PA1299 from Pseudomonas aeruginosa (strain ATCC 15692 / DSM 22644 / CIP 104116 / JCM 14847 / LMG 12228 / 1C / PRS 101 / PAO1).